A 279-amino-acid polypeptide reads, in one-letter code: 4-hydroxy-3-methylbut-2-enyl diphosphate reductase (279 aa).

Residue Cys12 coordinates [4Fe-4S] cluster. (2E)-4-hydroxy-3-methylbut-2-enyl diphosphate-binding residues include His40 and His70. His40 and His70 together coordinate dimethylallyl diphosphate. His40 and His70 together coordinate isopentenyl diphosphate. Cys92 contributes to the [4Fe-4S] cluster binding site. His119 is a binding site for (2E)-4-hydroxy-3-methylbut-2-enyl diphosphate. His119 lines the dimethylallyl diphosphate pocket. An isopentenyl diphosphate-binding site is contributed by His119. Glu121 acts as the Proton donor in catalysis. Residue Thr151 participates in (2E)-4-hydroxy-3-methylbut-2-enyl diphosphate binding. Cys181 contributes to the [4Fe-4S] cluster binding site. (2E)-4-hydroxy-3-methylbut-2-enyl diphosphate-binding residues include Ser209, Ser210, Asn211, and Ser251. The dimethylallyl diphosphate site is built by Ser209, Ser210, Asn211, and Ser251. Isopentenyl diphosphate-binding residues include Ser209, Ser210, Asn211, and Ser251.

The protein belongs to the IspH family. The cofactor is [4Fe-4S] cluster.

It catalyses the reaction isopentenyl diphosphate + 2 oxidized [2Fe-2S]-[ferredoxin] + H2O = (2E)-4-hydroxy-3-methylbut-2-enyl diphosphate + 2 reduced [2Fe-2S]-[ferredoxin] + 2 H(+). It carries out the reaction dimethylallyl diphosphate + 2 oxidized [2Fe-2S]-[ferredoxin] + H2O = (2E)-4-hydroxy-3-methylbut-2-enyl diphosphate + 2 reduced [2Fe-2S]-[ferredoxin] + 2 H(+). It functions in the pathway isoprenoid biosynthesis; dimethylallyl diphosphate biosynthesis; dimethylallyl diphosphate from (2E)-4-hydroxy-3-methylbutenyl diphosphate: step 1/1. Its pathway is isoprenoid biosynthesis; isopentenyl diphosphate biosynthesis via DXP pathway; isopentenyl diphosphate from 1-deoxy-D-xylulose 5-phosphate: step 6/6. In terms of biological role, catalyzes the conversion of 1-hydroxy-2-methyl-2-(E)-butenyl 4-diphosphate (HMBPP) into a mixture of isopentenyl diphosphate (IPP) and dimethylallyl diphosphate (DMAPP). Acts in the terminal step of the DOXP/MEP pathway for isoprenoid precursor biosynthesis. In Thermotoga neapolitana (strain ATCC 49049 / DSM 4359 / NBRC 107923 / NS-E), this protein is 4-hydroxy-3-methylbut-2-enyl diphosphate reductase.